The primary structure comprises 46 residues: MTQRTLRGTNRRRIRVSGFRARMRTATGRQVLRRRRAKGRYRLAVS.

This sequence belongs to the bacterial ribosomal protein bL34 family.

The sequence is that of Large ribosomal subunit protein bL34 from Synechococcus sp. (strain JA-2-3B'a(2-13)) (Cyanobacteria bacterium Yellowstone B-Prime).